We begin with the raw amino-acid sequence, 493 residues long: Glutamyl-tRNA(Gln) amidotransferase subunit A (493 aa).

Active-site charge relay system residues include Lys-78 and Ser-158. Ser-182 (acyl-ester intermediate) is an active-site residue.

Belongs to the amidase family. GatA subfamily. In terms of assembly, heterotrimer of A, B and C subunits.

The catalysed reaction is L-glutamyl-tRNA(Gln) + L-glutamine + ATP + H2O = L-glutaminyl-tRNA(Gln) + L-glutamate + ADP + phosphate + H(+). Functionally, allows the formation of correctly charged Gln-tRNA(Gln) through the transamidation of misacylated Glu-tRNA(Gln) in organisms which lack glutaminyl-tRNA synthetase. The reaction takes place in the presence of glutamine and ATP through an activated gamma-phospho-Glu-tRNA(Gln). The sequence is that of Glutamyl-tRNA(Gln) amidotransferase subunit A from Rickettsia conorii (strain ATCC VR-613 / Malish 7).